The following is an 87-amino-acid chain: U3-theraphotoxin-Hhn1a 13 (87 aa).

The N-terminal stretch at 1-24 is a signal peptide; sequence MVNMKASMFLTSAGLVPLFVVCYA. The propeptide occupies 25-52; that stretch reads SESEEKEFPKEMLSSIFAVDNDFKQEER. 3 cysteine pairs are disulfide-bonded: C54–C67, C61–C72, and C66–C79.

This sequence belongs to the neurotoxin 10 (Hwtx-1) family. 51 (Hntx-8) subfamily. Hntx-8 sub-subfamily. As to expression, expressed by the venom gland.

The protein resides in the secreted. Ion channel inhibitor. The chain is U3-theraphotoxin-Hhn1a 13 from Cyriopagopus hainanus (Chinese bird spider).